The primary structure comprises 183 residues: Peptide deformylase (183 aa).

Cysteine 111 and histidine 154 together coordinate Fe cation. Glutamate 155 is an active-site residue. Histidine 158 is a Fe cation binding site.

It belongs to the polypeptide deformylase family. Fe(2+) serves as cofactor.

It carries out the reaction N-terminal N-formyl-L-methionyl-[peptide] + H2O = N-terminal L-methionyl-[peptide] + formate. Its function is as follows. Removes the formyl group from the N-terminal Met of newly synthesized proteins. Requires at least a dipeptide for an efficient rate of reaction. N-terminal L-methionine is a prerequisite for activity but the enzyme has broad specificity at other positions. The sequence is that of Peptide deformylase from Staphylococcus aureus (strain COL).